Reading from the N-terminus, the 331-residue chain is Serine/threonine-protein phosphatase 6 catalytic subunit (331 aa).

4 residues coordinate Mn(2+): aspartate 79, histidine 81, aspartate 107, and asparagine 139. Histidine 140 serves as the catalytic Proton donor. Mn(2+) is bound by residues histidine 189 and histidine 264.

Belongs to the PPP phosphatase family. PP-6 (PP-V) subfamily. Forms a complex composed of catalytic subunit pph-6 and regulatory subunit saps-1; the interaction increases pph-6 and saps-1 protein stability. Requires Mn(2+) as cofactor.

It is found in the cytoplasm. The protein localises to the cell cortex. The protein resides in the cytoskeleton. It localises to the spindle pole. The enzyme catalyses O-phospho-L-seryl-[protein] + H2O = L-seryl-[protein] + phosphate. It catalyses the reaction O-phospho-L-threonyl-[protein] + H2O = L-threonyl-[protein] + phosphate. Functionally, catalytic subunit of protein phosphatase 6 (PP6). In complex with saps-1, promotes actomyosin contractility during cytokinesis by regulating the organization of cortical non-muscle myosin II nmy-2 and thus contributing to correct spindle positioning. Also required for the proper generation of pulling forces on spindle poles during anaphase by regulating the cortical localization of gpr-1, gpr-2 and lin-5. The polypeptide is Serine/threonine-protein phosphatase 6 catalytic subunit (Caenorhabditis elegans).